Reading from the N-terminus, the 365-residue chain is Probable dual-specificity RNA methyltransferase RlmN (365 aa).

Glutamate 106 serves as the catalytic Proton acceptor. The region spanning 112–352 (YPDRVTLCVS…VTVRDTRGRE (241 aa)) is the Radical SAM core domain. Residues cysteine 119 and cysteine 357 are joined by a disulfide bond. Residues cysteine 126, cysteine 130, and cysteine 133 each coordinate [4Fe-4S] cluster. S-adenosyl-L-methionine contacts are provided by residues 181–182 (GE), serine 215, 238–240 (SLH), and asparagine 314. Cysteine 357 serves as the catalytic S-methylcysteine intermediate.

It belongs to the radical SAM superfamily. RlmN family. [4Fe-4S] cluster serves as cofactor.

Its subcellular location is the cytoplasm. It carries out the reaction adenosine(2503) in 23S rRNA + 2 reduced [2Fe-2S]-[ferredoxin] + 2 S-adenosyl-L-methionine = 2-methyladenosine(2503) in 23S rRNA + 5'-deoxyadenosine + L-methionine + 2 oxidized [2Fe-2S]-[ferredoxin] + S-adenosyl-L-homocysteine. The enzyme catalyses adenosine(37) in tRNA + 2 reduced [2Fe-2S]-[ferredoxin] + 2 S-adenosyl-L-methionine = 2-methyladenosine(37) in tRNA + 5'-deoxyadenosine + L-methionine + 2 oxidized [2Fe-2S]-[ferredoxin] + S-adenosyl-L-homocysteine. Its function is as follows. Specifically methylates position 2 of adenine 2503 in 23S rRNA and position 2 of adenine 37 in tRNAs. This chain is Probable dual-specificity RNA methyltransferase RlmN, found in Thermobifida fusca (strain YX).